We begin with the raw amino-acid sequence, 314 residues long: Methionyl-tRNA formyltransferase (314 aa).

111-114 (SLLP) serves as a coordination point for (6S)-5,6,7,8-tetrahydrofolate.

The protein belongs to the Fmt family.

The enzyme catalyses L-methionyl-tRNA(fMet) + (6R)-10-formyltetrahydrofolate = N-formyl-L-methionyl-tRNA(fMet) + (6S)-5,6,7,8-tetrahydrofolate + H(+). Its function is as follows. Attaches a formyl group to the free amino group of methionyl-tRNA(fMet). The formyl group appears to play a dual role in the initiator identity of N-formylmethionyl-tRNA by promoting its recognition by IF2 and preventing the misappropriation of this tRNA by the elongation apparatus. The chain is Methionyl-tRNA formyltransferase from Nitrobacter winogradskyi (strain ATCC 25391 / DSM 10237 / CIP 104748 / NCIMB 11846 / Nb-255).